The following is a 208-amino-acid chain: Dephospho-CoA kinase (208 aa).

Positions 5 to 201 (IVALTGGIGS…QRYLALAASA (197 aa)) constitute a DPCK domain. 13-18 (GSGKST) lines the ATP pocket.

The protein belongs to the CoaE family.

Its subcellular location is the cytoplasm. It carries out the reaction 3'-dephospho-CoA + ATP = ADP + CoA + H(+). It functions in the pathway cofactor biosynthesis; coenzyme A biosynthesis; CoA from (R)-pantothenate: step 5/5. Its function is as follows. Catalyzes the phosphorylation of the 3'-hydroxyl group of dephosphocoenzyme A to form coenzyme A. This chain is Dephospho-CoA kinase, found in Sodalis glossinidius (strain morsitans).